Reading from the N-terminus, the 70-residue chain is Large ribosomal subunit protein bL31 (70 aa).

Zn(2+) contacts are provided by Cys-16, Cys-18, Cys-37, and Cys-40.

It belongs to the bacterial ribosomal protein bL31 family. Type A subfamily. In terms of assembly, part of the 50S ribosomal subunit. Zn(2+) is required as a cofactor.

Binds the 23S rRNA. The sequence is that of Large ribosomal subunit protein bL31 from Psychromonas ingrahamii (strain DSM 17664 / CCUG 51855 / 37).